A 233-amino-acid polypeptide reads, in one-letter code: Forkhead box protein L3 (233 aa).

The segment at residues 32 to 130 (RPAYSYIALI…ENGNYRRRRR (99 aa)) is a DNA-binding region (fork-head). The segment covering 125–134 (YRRRRRRRGP) has biased composition (basic residues). The segment at 125 to 198 (YRRRRRRRGP…PRDLKFSIDY (74 aa)) is disordered. Over residues 175 to 184 (REPPASPAPP) the composition is skewed to pro residues. Positions 185-194 (GKEHPRDLKF) are enriched in basic and acidic residues.

The protein resides in the nucleus. Functionally, probable transcriptional regulator. The protein is Forkhead box protein L3 of Homo sapiens (Human).